Here is a 317-residue protein sequence, read N- to C-terminus: NADH kinase (317 aa).

This sequence belongs to the NAD kinase family. As to quaternary structure, homodimer. Ubiquitous.

Its subcellular location is the cytoplasm. The enzyme catalyses NADH + ATP = ADP + NADPH + H(+). With respect to regulation, two-fold decrease in activity in the presence of PPi, iodoacetate or para-chloromercuribenzoate. Phosphorylates specifically NADH. Can phosphorylate NAD with a 100-fold decrease in efficiency compared to NADH. Prefers ATP as nucleoside triphosphate substrate. Can also utilize UTP, GTP and CTP. Key source of the cellular reductant NADPH which is an important antioxidant factor. In Arabidopsis thaliana (Mouse-ear cress), this protein is NADH kinase (NADK3).